Consider the following 154-residue polypeptide: Large-conductance mechanosensitive channel (154 aa).

The next 3 membrane-spanning stretches (helical) occupy residues 16–36 (VLGL…ISSV), 39–59 (DLLM…GFFI), and 89–109 (GQFL…FMIM).

The protein belongs to the MscL family. In terms of assembly, homopentamer.

It localises to the cell inner membrane. In terms of biological role, channel that opens in response to stretch forces in the membrane lipid bilayer. May participate in the regulation of osmotic pressure changes within the cell. The polypeptide is Large-conductance mechanosensitive channel (Zymomonas mobilis subsp. mobilis (strain ATCC 31821 / ZM4 / CP4)).